The chain runs to 699 residues: Proline-rich receptor-like protein kinase PERK7 (699 aa).

The disordered stretch occupies residues 1-167 (MAEGQSPENS…TSNSGSNSSS (167 aa)). At 1–172 (MAEGQSPENS…SNSSSNDGLN (172 aa)) the chain is on the extracellular side. Pro residues-rich tracts occupy residues 9–23 (NSPP…PSPP) and 43–68 (SPPP…PPLP). An N-linked (GlcNAc...) asparagine glycan is attached at Asn-70. Low complexity predominate over residues 100–121 (PPQQSDNNGNKGNNNENNKGND). N-linked (GlcNAc...) asparagine glycosylation is present at Asn-131. The segment covering 148 to 158 (HSQPRSLAPPT) has biased composition (polar residues). Asn-164 is a glycosylation site (N-linked (GlcNAc...) asparagine). The helical transmembrane segment at 173–193 (IGAVIGLVAAAGILFIVMILL) threads the bilayer. The Cytoplasmic portion of the chain corresponds to 194-699 (CVCCFRKKKK…SKTTTTNRGI (506 aa)). Thr-325 carries the post-translational modification Phosphothreonine. Residues 336–615 (FSKDRLLGQG…VRTLEGDASL (280 aa)) form the Protein kinase domain. Residues 342-350 (LGQGGFGYV) and Lys-364 contribute to the ATP site. Tyr-410 bears the Phosphotyrosine mark. Catalysis depends on Asp-461, which acts as the Proton acceptor. Residues Ser-465 and Ser-494 each carry the phosphoserine modification. Residues Thr-495 and Thr-500 each carry the phosphothreonine modification. A Phosphotyrosine modification is found at Tyr-508. Disordered stretches follow at residues 609-639 (LEGD…DYEM) and 658-699 (DYGA…NRGI). The segment covering 687–699 (GSTSKTTTTNRGI) has biased composition (polar residues).

Belongs to the protein kinase superfamily. Ser/Thr protein kinase family. Mostly expressed in flower buds.

The protein localises to the cell membrane. The enzyme catalyses L-seryl-[protein] + ATP = O-phospho-L-seryl-[protein] + ADP + H(+). It catalyses the reaction L-threonyl-[protein] + ATP = O-phospho-L-threonyl-[protein] + ADP + H(+). This is Proline-rich receptor-like protein kinase PERK7 (PERK7) from Arabidopsis thaliana (Mouse-ear cress).